Reading from the N-terminus, the 625-residue chain is MAU2 chromatid cohesion factor homolog (625 aa).

3 TPR repeats span residues 96 to 129 (FDTA…SQNN), 451 to 484 (GGFY…ANAE), and 491 to 524 (SCSL…ASKI). Polar residues predominate over residues 600–611 (TVPTTETSTSAL). A disordered region spans residues 600–625 (TVPTTETSTSALQQPQQPAAQFGQFY). A compositionally biased stretch (low complexity) spans 612–625 (QQPQQPAAQFGQFY).

This sequence belongs to the SCC4/mau-2 family. Interacts with Nipped-B to form the cohesin loading complex.

It is found in the nucleus. The protein localises to the nucleoplasm. Its function is as follows. Required for association of the cohesin complex with chromatin during interphase. Plays a role in sister chromatid cohesion and normal progression through prometaphase. This chain is MAU2 chromatid cohesion factor homolog, found in Drosophila mojavensis (Fruit fly).